Reading from the N-terminus, the 88-residue chain is Small ribosomal subunit protein bS20 (88 aa).

Residues 1–20 are disordered; the sequence is MANHKSAEKRARQTIKRTER.

This sequence belongs to the bacterial ribosomal protein bS20 family.

In terms of biological role, binds directly to 16S ribosomal RNA. The protein is Small ribosomal subunit protein bS20 of Campylobacter fetus subsp. fetus (strain 82-40).